Here is an 898-residue protein sequence, read N- to C-terminus: Chaperone protein ClpB 1 (898 aa).

The 143-residue stretch at Pro-6–Ser-148 folds into the Clp R domain. Repeat stretches follow at residues Phe-9–Gln-74 and Leu-85–Ser-148. Residues Glu-161 to Gln-344 are NBD1. Gly-208 to Thr-215 contributes to the ATP binding site. A linker region spans residues Pro-345–Gly-560. The stretch at Ile-395–Gly-536 forms a coiled coil. Positions Glu-570–Thr-781 are NBD2. Gly-620–Thr-627 contributes to the ATP binding site. The interval Leu-782–Ser-898 is C-terminal.

It belongs to the ClpA/ClpB family. Homohexamer. The oligomerization is ATP-dependent.

It is found in the cytoplasm. Functionally, part of a stress-induced multi-chaperone system, it is involved in the recovery of the cell from heat-induced damage, in cooperation with DnaK, DnaJ and GrpE. Acts before DnaK, in the processing of protein aggregates. Protein binding stimulates the ATPase activity; ATP hydrolysis unfolds the denatured protein aggregates, which probably helps expose new hydrophobic binding sites on the surface of ClpB-bound aggregates, contributing to the solubilization and refolding of denatured protein aggregates by DnaK. The protein is Chaperone protein ClpB 1 (clpB1) of Synechocystis sp. (strain ATCC 27184 / PCC 6803 / Kazusa).